The sequence spans 136 residues: Acyl carrier protein 2, chloroplastic (136 aa).

Residues 1–51 (MASIAASASISLQARPRQLAIAASQVKSFSNGRRSSLSFNLRQLPTRLTVS) constitute a chloroplast transit peptide. In terms of domain architecture, Carrier spans 56–131 (PETVDKVCAV…QAAALIEELL (76 aa)). Ser-91 is subject to O-(pantetheine 4'-phosphoryl)serine.

The protein belongs to the acyl carrier protein (ACP) family. Post-translationally, 4'-phosphopantetheine is transferred from CoA to a specific serine of apo-ACP by acpS. This modification is essential for activity because fatty acids are bound in thioester linkage to the sulfhydryl of the prosthetic group.

The protein localises to the plastid. The protein resides in the chloroplast. Its function is as follows. Carrier of the growing fatty acid chain in fatty acid biosynthesis. This chain is Acyl carrier protein 2, chloroplastic (ACP2), found in Arabidopsis thaliana (Mouse-ear cress).